A 96-amino-acid chain; its full sequence is NADH-ubiquinone oxidoreductase chain 4L (96 aa).

The next 3 helical transmembrane spans lie at 1–21 (MPTTLIFTSFFLALLGLSLQR), 27–47 (LLLTLESMALALYVSTALWAL), and 57–77 (APLIILTFSACEAGMGLSLMI).

The protein belongs to the complex I subunit 4L family.

The protein localises to the mitochondrion membrane. The enzyme catalyses a ubiquinone + NADH + 5 H(+)(in) = a ubiquinol + NAD(+) + 4 H(+)(out). In terms of biological role, core subunit of the mitochondrial membrane respiratory chain NADH dehydrogenase (Complex I) which catalyzes electron transfer from NADH through the respiratory chain, using ubiquinone as an electron acceptor. Part of the enzyme membrane arm which is embedded in the lipid bilayer and involved in proton translocation. This is NADH-ubiquinone oxidoreductase chain 4L (MT-ND4L) from Petromyzon marinus (Sea lamprey).